A 307-amino-acid polypeptide reads, in one-letter code: Fructokinase (307 aa).

The protein belongs to the carbohydrate kinase PfkB family.

The enzyme catalyses D-fructose + ATP = D-fructose 6-phosphate + ADP + H(+). In Escherichia coli, this protein is Fructokinase (cscK).